We begin with the raw amino-acid sequence, 209 residues long: uncharacterized protein (209 aa).

The stretch at 13-75 (LSAVDKQMDT…AINLAAVMTD (63 aa)) forms a coiled coil. Positions 107-135 (ATPLPSSNTNNEQSMSTYSSSISGKTSET) are disordered. Residues 110–119 (LPSSNTNNEQ) show a composition bias toward polar residues. The span at 120–133 (SMSTYSSSISGKTS) shows a compositional bias: low complexity.

The protein belongs to the asfivirus K205R family.

Its subcellular location is the host cytoplasm. Functionally, induces host endoplasmic reticulum stress and consequently activates autophagy and NF-kappa-B signaling pathway. In turn, may induce autophagy-mediated STING1 degradation and innate immune evasion. This is an uncharacterized protein from Ornithodoros (relapsing fever ticks).